We begin with the raw amino-acid sequence, 518 residues long: Myosin-binding protein 7 (518 aa).

The GTD-binding domain occupies 69-167 (NELELLRETV…ALTFEAQAYK (99 aa)). The interval 276-350 (VVGQSPRHQR…DSSEIGDNDM (75 aa)) is disordered. Positions 291–301 (STGSASSLLGT) are enriched in low complexity. The span at 310–320 (SNDSPRSNNGS) shows a compositional bias: polar residues. At Ser385 the chain carries Phosphoserine. Residues 399 to 431 (EISKLYMRLQALEADRESMRQAIMSMRTEKAQM) are a coiled coil. A helical transmembrane segment spans residues 458-477 (IIGAFNFISVFKWITSFVFW).

In terms of assembly, interacts with myosin XI-I.

Its subcellular location is the endomembrane system. In terms of biological role, membrane-anchored myosin receptors that define a distinct, plant-specific transport vesicle compartment. This chain is Myosin-binding protein 7, found in Arabidopsis thaliana (Mouse-ear cress).